Here is a 142-residue protein sequence, read N- to C-terminus: MNITDIKKYIPHRYPFLLIDRVIKIEKDKSLVAIKNVTVNEPFFTGHFPVRPVMPGVLIIESLAQAAGILIVKSLNLPEGHKDIYFFAGVDNARFKRVVEPGDQLTLEVKVLKVHRGLWKFEGKATVDDQLACKAELMTIKG.

Histidine 47 is a catalytic residue.

Belongs to the thioester dehydratase family. FabZ subfamily.

It localises to the cytoplasm. The enzyme catalyses a (3R)-hydroxyacyl-[ACP] = a (2E)-enoyl-[ACP] + H2O. Its function is as follows. Involved in unsaturated fatty acids biosynthesis. Catalyzes the dehydration of short chain beta-hydroxyacyl-ACPs and long chain saturated and unsaturated beta-hydroxyacyl-ACPs. The chain is 3-hydroxyacyl-[acyl-carrier-protein] dehydratase FabZ from Coxiella burnetii (strain RSA 331 / Henzerling II).